We begin with the raw amino-acid sequence, 163 residues long: Probable histone H2A.4 (163 aa).

2 disordered regions span residues 1–30 (MEVG…VSRS) and 134–163 (SAAA…AAAA). Residues 12–21 (GAGGRRGGGG) are compositionally biased toward gly residues. Positions 147–163 (KSPKKATTKSPKKAAAA) are enriched in basic residues. 2 short sequence motifs (SPKK motif) span residues 148 to 151 (SPKK) and 156 to 159 (SPKK).

It belongs to the histone H2A family. The nucleosome is a histone octamer containing two molecules each of H2A, H2B, H3 and H4 assembled in one H3-H4 heterotetramer and two H2A-H2B heterodimers. The octamer wraps approximately 147 bp of DNA.

It localises to the nucleus. Its subcellular location is the chromosome. Its function is as follows. Core component of nucleosome. Nucleosomes wrap and compact DNA into chromatin, limiting DNA accessibility to the cellular machineries which require DNA as a template. Histones thereby play a central role in transcription regulation, DNA repair, DNA replication and chromosomal stability. DNA accessibility is regulated via a complex set of post-translational modifications of histones, also called histone code, and nucleosome remodeling. The chain is Probable histone H2A.4 from Oryza sativa subsp. indica (Rice).